The primary structure comprises 660 residues: Methionine--tRNA ligase 1 (660 aa).

The 'HIGH' region signature appears at 15–25 (YYPSGKLHIGH). A 'KMSKS' region motif is present at residues 310–314 (KMSKS). K313 contributes to the ATP binding site. The tRNA-binding domain maps to 560–660 (DFFKVELRVA…QNLPNGTKIK (101 aa)).

This sequence belongs to the class-I aminoacyl-tRNA synthetase family. MetG type 2B subfamily. As to quaternary structure, homodimer.

The protein localises to the cytoplasm. It carries out the reaction tRNA(Met) + L-methionine + ATP = L-methionyl-tRNA(Met) + AMP + diphosphate. Functionally, is required not only for elongation of protein synthesis but also for the initiation of all mRNA translation through initiator tRNA(fMet) aminoacylation. The chain is Methionine--tRNA ligase 1 from Bacillus cereus (strain ATCC 14579 / DSM 31 / CCUG 7414 / JCM 2152 / NBRC 15305 / NCIMB 9373 / NCTC 2599 / NRRL B-3711).